Reading from the N-terminus, the 288-residue chain is Nucleotide-binding protein NE1849 (288 aa).

An ATP-binding site is contributed by 8–15; sequence GLSGSGKS. Residue 57–60 coordinates GTP; sequence DMRS.

Belongs to the RapZ-like family.

Displays ATPase and GTPase activities. The chain is Nucleotide-binding protein NE1849 from Nitrosomonas europaea (strain ATCC 19718 / CIP 103999 / KCTC 2705 / NBRC 14298).